We begin with the raw amino-acid sequence, 116 residues long: NADPH-dependent 7-cyano-7-deazaguanine reductase (116 aa).

Catalysis depends on Cys31, which acts as the Thioimide intermediate. The active-site Proton donor is Asp38. Residues 53-55 (IEL) and 72-73 (YE) contribute to the substrate site.

Belongs to the GTP cyclohydrolase I family. QueF type 1 subfamily.

Its subcellular location is the cytoplasm. The catalysed reaction is 7-aminomethyl-7-carbaguanine + 2 NADP(+) = 7-cyano-7-deazaguanine + 2 NADPH + 3 H(+). It participates in tRNA modification; tRNA-queuosine biosynthesis. Its function is as follows. Catalyzes the NADPH-dependent reduction of 7-cyano-7-deazaguanine (preQ0) to 7-aminomethyl-7-deazaguanine (preQ1). This chain is NADPH-dependent 7-cyano-7-deazaguanine reductase, found in Pelodictyon phaeoclathratiforme (strain DSM 5477 / BU-1).